The chain runs to 124 residues: Small ribosomal subunit protein uS12 (124 aa).

Asp89 carries the 3-methylthioaspartic acid modification. The disordered stretch occupies residues 105–124 (QGVKNRKQARSRYGAKKEKS). The segment covering 108–118 (KNRKQARSRYG) has biased composition (basic residues).

It belongs to the universal ribosomal protein uS12 family. Part of the 30S ribosomal subunit. Contacts proteins S8 and S17. May interact with IF1 in the 30S initiation complex.

Its function is as follows. With S4 and S5 plays an important role in translational accuracy. Functionally, interacts with and stabilizes bases of the 16S rRNA that are involved in tRNA selection in the A site and with the mRNA backbone. Located at the interface of the 30S and 50S subunits, it traverses the body of the 30S subunit contacting proteins on the other side and probably holding the rRNA structure together. The combined cluster of proteins S8, S12 and S17 appears to hold together the shoulder and platform of the 30S subunit. The polypeptide is Small ribosomal subunit protein uS12 (rpsL) (Mycolicibacterium smegmatis (strain ATCC 700084 / mc(2)155) (Mycobacterium smegmatis)).